A 288-amino-acid polypeptide reads, in one-letter code: Lipoyl synthase (288 aa).

[4Fe-4S] cluster contacts are provided by cysteine 39, cysteine 44, cysteine 50, cysteine 65, cysteine 69, cysteine 72, and serine 276. The region spanning 51-265 (WGKGTATFMI…KETGLKKGFE (215 aa)) is the Radical SAM core domain.

It belongs to the radical SAM superfamily. Lipoyl synthase family. Requires [4Fe-4S] cluster as cofactor.

It localises to the cytoplasm. It carries out the reaction [[Fe-S] cluster scaffold protein carrying a second [4Fe-4S](2+) cluster] + N(6)-octanoyl-L-lysyl-[protein] + 2 oxidized [2Fe-2S]-[ferredoxin] + 2 S-adenosyl-L-methionine + 4 H(+) = [[Fe-S] cluster scaffold protein] + N(6)-[(R)-dihydrolipoyl]-L-lysyl-[protein] + 4 Fe(3+) + 2 hydrogen sulfide + 2 5'-deoxyadenosine + 2 L-methionine + 2 reduced [2Fe-2S]-[ferredoxin]. Its pathway is protein modification; protein lipoylation via endogenous pathway; protein N(6)-(lipoyl)lysine from octanoyl-[acyl-carrier-protein]: step 2/2. Its function is as follows. Catalyzes the radical-mediated insertion of two sulfur atoms into the C-6 and C-8 positions of the octanoyl moiety bound to the lipoyl domains of lipoate-dependent enzymes, thereby converting the octanoylated domains into lipoylated derivatives. The sequence is that of Lipoyl synthase from Bacteroides fragilis (strain YCH46).